The following is a 1115-amino-acid chain: Carbamoyl phosphate synthase large chain (1115 aa).

The interval 1–407 is carboxyphosphate synthetic domain; sequence MPRRTDLHHV…ALGKVMRSLE (407 aa). Positions 134, 174, 180, 181, 213, 215, 220, 246, 247, 248, 290, and 304 each coordinate ATP. The 196-residue stretch at 138 to 333 folds into the ATP-grasp 1 domain; the sequence is KDIVAKAGGE…IAKIAAKLAI (196 aa). Residues glutamine 290, glutamate 304, and asparagine 306 each contribute to the Mg(2+) site. Glutamine 290, glutamate 304, and asparagine 306 together coordinate Mn(2+). The tract at residues 408 to 559 is oligomerization domain; that stretch reads TTRAGFWTAP…ELDPAAETEV (152 aa). The segment at 560–965 is carbamoyl phosphate synthetic domain; that stretch reads APQTERPKVL…AFAKSQTAAY (406 aa). The 192-residue stretch at 693–884 folds into the ATP-grasp 2 domain; sequence GDLLSAAGLP…LAKACARIML (192 aa). ATP contacts are provided by arginine 729, arginine 768, leucine 770, glutamate 775, glycine 800, isoleucine 801, histidine 802, serine 803, glutamine 843, and glutamate 855. Glutamine 843, glutamate 855, and asparagine 857 together coordinate Mg(2+). Residues glutamine 843, glutamate 855, and asparagine 857 each coordinate Mn(2+). The MGS-like domain maps to 966–1113; sequence GSLPAQGTVF…QELHRVIGGV (148 aa). Residues 966-1115 are allosteric domain; the sequence is GSLPAQGTVF…LHRVIGGVER (150 aa).

This sequence belongs to the CarB family. In terms of assembly, composed of two chains; the small (or glutamine) chain promotes the hydrolysis of glutamine to ammonia, which is used by the large (or ammonia) chain to synthesize carbamoyl phosphate. Tetramer of heterodimers (alpha,beta)4. Mg(2+) serves as cofactor. Mn(2+) is required as a cofactor.

It carries out the reaction hydrogencarbonate + L-glutamine + 2 ATP + H2O = carbamoyl phosphate + L-glutamate + 2 ADP + phosphate + 2 H(+). The catalysed reaction is hydrogencarbonate + NH4(+) + 2 ATP = carbamoyl phosphate + 2 ADP + phosphate + 2 H(+). The protein operates within amino-acid biosynthesis; L-arginine biosynthesis; carbamoyl phosphate from bicarbonate: step 1/1. It participates in pyrimidine metabolism; UMP biosynthesis via de novo pathway; (S)-dihydroorotate from bicarbonate: step 1/3. Its function is as follows. Large subunit of the glutamine-dependent carbamoyl phosphate synthetase (CPSase). CPSase catalyzes the formation of carbamoyl phosphate from the ammonia moiety of glutamine, carbonate, and phosphate donated by ATP, constituting the first step of 2 biosynthetic pathways, one leading to arginine and/or urea and the other to pyrimidine nucleotides. The large subunit (synthetase) binds the substrates ammonia (free or transferred from glutamine from the small subunit), hydrogencarbonate and ATP and carries out an ATP-coupled ligase reaction, activating hydrogencarbonate by forming carboxy phosphate which reacts with ammonia to form carbamoyl phosphate. This chain is Carbamoyl phosphate synthase large chain, found in Mycobacterium bovis (strain ATCC BAA-935 / AF2122/97).